Reading from the N-terminus, the 33-residue chain is Large ribosomal subunit protein eL28 (33 aa).

It belongs to the eukaryotic ribosomal protein eL28 family. Component of the large ribosomal subunit.

The protein resides in the cytoplasm. Functionally, component of the large ribosomal subunit. The ribosome is a large ribonucleoprotein complex responsible for the synthesis of proteins in the cell. This chain is Large ribosomal subunit protein eL28 (rpl28), found in Xenopus laevis (African clawed frog).